The sequence spans 594 residues: 3-hydroxy-3-methylglutaryl coenzyme A reductase 2-A (594 aa).

Residues 1-32 (MDVRRRPVKSLSSAKTATAGEPPKSQQQHPKA) are disordered. Over 1-37 (MDVRRRPVKSLSSAKTATAGEPPKSQQQHPKASDALP) the chain is Lumenal. The chain crosses the membrane as a helical span at residues 38 to 58 (LPLYLTNGLFFTMFFSVMYFL). Residues 59-81 (LHRWREKIRNSTPLHVVTLSELA) are Cytoplasmic-facing. Residues 82-102 (ALVLLMASVIYLLGFFGIGFV) traverse the membrane as a helical segment. Topologically, residues 103 to 549 (RSVIRPSPDA…SKESPGSNSR (447 aa)) are lumenal. An N-linked (GlcNAc...) asparagine glycan is attached at Asn261. Glu273 (charge relay system) is an active-site residue. N-linked (GlcNAc...) asparagine glycosylation is present at Asn337. Active-site charge relay system residues include Lys405 and Asp481. Residues 550–570 (LLASIVAGSVLAGELSLMSAL) traverse the membrane as a helical segment. At 571–594 (AAGQLVKSHMKYNRSSKDITKLSS) the chain is on the cytoplasmic side. The active-site Proton donor is the His579.

This sequence belongs to the HMG-CoA reductase family. In terms of tissue distribution, mostly expressed in the petioles of seedlings, seedlings and roots, and, to a lower extent, in seeds, leaves, stems and flowers.

It is found in the endoplasmic reticulum membrane. The protein resides in the plastid. It localises to the chloroplast membrane. The protein localises to the peroxisome membrane. It carries out the reaction (R)-mevalonate + 2 NADP(+) + CoA = (3S)-3-hydroxy-3-methylglutaryl-CoA + 2 NADPH + 2 H(+). Its pathway is metabolic intermediate biosynthesis; (R)-mevalonate biosynthesis; (R)-mevalonate from acetyl-CoA: step 3/3. With respect to regulation, competitive inhibition by mevinolin (Mev) is leading to a significant reduction of total ginsenoside in adventitious roots. Triggered by darkness. In terms of biological role, catalyzes the synthesis of mevalonate, the specific precursor of all isoprenoid compounds present in plants. Component of the triterpene saponins (e.g. ginsenosides or panaxosides) and phytosterols biosynthetic pathways. This is 3-hydroxy-3-methylglutaryl coenzyme A reductase 2-A from Panax ginseng (Korean ginseng).